A 1168-amino-acid polypeptide reads, in one-letter code: Homeodomain-interacting protein kinase 2 (1168 aa).

Ser-16 carries the post-translational modification Phosphoserine. Lys-32 is covalently cross-linked (Glycyl lysine isopeptide (Lys-Gly) (interchain with G-Cter in SUMO); alternate). Lys-32 is covalently cross-linked (Glycyl lysine isopeptide (Lys-Gly) (interchain with G-Cter in SUMO2); alternate). Residues 97–230 (SASSTSVTGQ…TNEIVAIKIL (134 aa)) are transcriptional corepression. Residues Ser-118 and Ser-135 each carry the phosphoserine modification. Position 141 is a phosphothreonine (Thr-141). The tract at residues 189–520 (HEVLCSMTNT…DADKRITPIE (332 aa)) is interaction with DAXX. Residues 199-527 (YEVLEFLGRG…PIETLNHPFV (329 aa)) enclose the Protein kinase domain. ATP is bound by residues 205–213 (LGRGTFGQV) and Lys-228. A phosphothreonine mark is found at Thr-252 and Thr-273. Asp-324 serves as the catalytic Proton acceptor. Tyr-361 is subject to Phosphotyrosine. Residue Ser-441 is modified to Phosphoserine. Residues Thr-482, Thr-517, and Thr-566 each carry the phosphothreonine modification. An interaction with SKI and SMAD1 region spans residues 539–816 (THVKSCFQNM…KENTPPRCAM (278 aa)). Positions 595–772 (PSAASMAAVA…MRQQPTSTTS (178 aa)) are interaction with DAZAP2. Residues Ser-607 and Ser-641 each carry the phosphoserine modification. Thr-660 carries the phosphothreonine modification. The interval 724–869 (RNTHAHGSHY…ITISSDTDEE (146 aa)) is interaction with POU4F1. The tract at residues 746–848 (HVTLPAAQPL…TRERQRQTIV (103 aa)) is interaction with CTBP1. An interaction with HMGA1 region spans residues 759–869 (VAHVMRQQPT…ITISSDTDEE (111 aa)). The segment at 764–820 (RQQPTSTTSSRKSKQHQPSMRNVSTCEVTSSQSTSSPQRSKRVKENTPPRCAMVHSS) is disordered. Residues 765–791 (QQPTSTTSSRKSKQHQPSMRNVSTCEV) are compositionally biased toward polar residues. The short motif at 774 to 777 (RKSK) is the Nuclear localization signal 1 (NLS1) element. 2 positions are modified to phosphoserine: Ser-787 and Ser-799. The span at 792–801 (TSSQSTSSPQ) shows a compositional bias: low complexity. Residues 804–807 (KRVK) carry the Nuclear localization signal 2 (NLS2) motif. The tract at residues 812–907 (PRCAMVHSSP…YSDSSSNTSP (96 aa)) is interaction with TP53 and TP73. Residues 845–879 (QTIVIPDTPSPTVSVITISSDTDEEEEQKHAPTST) are interaction with UBE2I. The segment at 845–952 (QTIVIPDTPS…PLKTQASEVL (108 aa)) is localization to nuclear speckles. The tract at residues 845 to 952 (QTIVIPDTPS…PLKTQASEVL (108 aa)) is required for localization to nuclear speckles. The segment at 854–876 (SPTVSVITISSDTDEEEEQKHAP) is interaction with UBL1. The interval 856-880 (TVSVITISSDTDEEEEQKHAPTSTV) is SUMO interaction motifs (SIM); required for nuclear localization and kinase activity. A disordered region spans residues 894–936 (HDSPYSDSSSNTSPYSVQQRTGHNGTNTLDTKGALENHCTGNP). A compositionally biased stretch (low complexity) spans 895–909 (DSPYSDSSSNTSPYS). Ser-906 carries the phosphoserine modification. Residues 907–1022 (PYSVQQRTGH…LSQAQPHMAT (116 aa)) form an interaction with AXIN1 region. Polar residues predominate over residues 910-923 (VQQRTGHNGTNTLD). Residues Lys-925 and Lys-945 each participate in a glycyl lysine isopeptide (Lys-Gly) (interchain with G-Cter in SUMO2) cross-link. The segment at 956-1168 (DSLGPAVSTG…PAKVNQYPYI (213 aa)) is autoinhibitory domain (AID). The interval 960 to 1030 (PAVSTGHHSS…ATDRTGSHRR (71 aa)) is disordered. Ser-963 is modified (phosphoserine). Low complexity-rich tracts occupy residues 965-991 (GHHS…GSSS) and 998-1018 (QQRP…QAQP). 3 positions are modified to phosphoserine: Ser-1014, Ser-1125, and Ser-1158. Lys-1161 participates in a covalent cross-link: Glycyl lysine isopeptide (Lys-Gly) (interchain with G-Cter in SUMO).

The protein belongs to the protein kinase superfamily. CMGC Ser/Thr protein kinase family. HIPK subfamily. In terms of assembly, interacts with CREB1, SIAH1, WSB1, CBX4, TRADD, p53/TP53, TP73, TP63, CREBBP, DAXX, P53DINP1, SKI, SMAD1, SMAD2 and SMAD3, but not SMAD4. Interacts with ATF1, PML, RUNX1, EP300, NKX1-2, NKX2-5, UBE2I, HMGA1, CTBP1, AXIN1, NLK, MYB, POU4F1, POU4F2, POU4F3, UBE2I, UBL1 and ZBTB4. Probably part of a complex consisting of p53/TP53, HIPK2 and AXIN1. Interacts with SP100; positively regulates TP53-dependent transcription. Interacts with DAZAP2; the interaction results in phosphorylation of DAZAP2 which causes localization of DAZAP2 to the nucleus, reduces interaction of DAZAP2 with HIPK2 and prevents DAZAP2-dependent degradation of HIPK2. Interacts with SIAH1; the interaction is promoted by DAZAP2 and results in SIAH1-mediated ubiquitination and subsequent proteasomal degradation of HIPK2. Autophosphorylation at Tyr-361 in the activation loop activates the kinase and promotes nuclear localization. Post-translationally, sumoylated. When conjugated it is directed to nuclear speckles. Desumoylated by SENP1. Sumoylation on Lys-32 is promoted by the E3 SUMO-protein ligase CBX4. In terms of processing, ubiquitinated by FBXO3, WSB1 and SIAH1, leading to rapid proteasome-dependent degradation. The degradation mediated by FBXO3, but not ubiquitination, is prevented in the presence of PML. The degradation mediated by WSB1 and SIAH1 is reversibly reduced upon DNA damage. Cleaved at Asp-895 and Asp-956 by CASP6 in a p53/TP53-dependent manner. The cleaved form lacks the autoinhibitory C-terminal domain (AID), resulting in a hyperactive kinase, which potentiates p53/TP53 Ser-46 phosphorylation and subsequent activation of the cell death machinery.

It is found in the nucleus. The protein localises to the PML body. The protein resides in the cytoplasm. It catalyses the reaction L-seryl-[protein] + ATP = O-phospho-L-seryl-[protein] + ADP + H(+). The catalysed reaction is L-threonyl-[protein] + ATP = O-phospho-L-threonyl-[protein] + ADP + H(+). In terms of biological role, serine/threonine-protein kinase involved in transcription regulation, p53/TP53-mediated cellular apoptosis and regulation of the cell cycle. Acts as a corepressor of several transcription factors, including SMAD1 and POU4F1/Brn3a and probably NK homeodomain transcription factors. Phosphorylates PDX1, ATF1, PML, p53/TP53, CREB1, CTBP1, CBX4, RUNX1, EP300, CTNNB1, HMGA1, ZBTB4 and DAZAP2. Inhibits cell growth and promotes apoptosis through the activation of p53/TP53 both at the transcription level and at the protein level (by phosphorylation and indirect acetylation). The phosphorylation of p53/TP53 may be mediated by a p53/TP53-HIPK2-AXIN1 complex. Involved in the response to hypoxia by acting as a transcriptional co-suppressor of HIF1A. Mediates transcriptional activation of TP73. In response to TGFB, cooperates with DAXX to activate JNK. Negative regulator through phosphorylation and subsequent proteasomal degradation of CTNNB1 and the antiapoptotic factor CTBP1. In the Wnt/beta-catenin signaling pathway acts as an intermediate kinase between MAP3K7/TAK1 and NLK to promote the proteasomal degradation of MYB. Phosphorylates CBX4 upon DNA damage and promotes its E3 SUMO-protein ligase activity. Activates CREB1 and ATF1 transcription factors by phosphorylation in response to genotoxic stress. In response to DNA damage, stabilizes PML by phosphorylation. PML, HIPK2 and FBXO3 may act synergically to activate p53/TP53-dependent transactivation. Promotes angiogenesis, and is involved in erythroid differentiation, especially during fetal liver erythropoiesis. Phosphorylation of RUNX1 and EP300 stimulates EP300 transcription regulation activity. Triggers ZBTB4 protein degradation in response to DNA damage. In response to DNA damage, phosphorylates DAZAP2 which localizes DAZAP2 to the nucleus, reduces interaction of DAZAP2 with HIPK2 and prevents DAZAP2-dependent ubiquitination of HIPK2 by E3 ubiquitin-protein ligase SIAH1 and subsequent proteasomal degradation. Modulates HMGA1 DNA-binding affinity. In response to high glucose, triggers phosphorylation-mediated subnuclear localization shifting of PDX1. Involved in the regulation of eye size, lens formation and retinal lamination during late embryogenesis. In Mesocricetus auratus (Golden hamster), this protein is Homeodomain-interacting protein kinase 2 (Hipk2).